The sequence spans 511 residues: Sodium/proline symporter 2 (511 aa).

Transmembrane regions (helical) follow at residues 16–36 (WQTY…GYYG), 54–74 (IGPY…WMIM), 85–105 (LSAM…YFVV), 139–159 (IISG…GFVS), 175–195 (GLLM…YLAV), 204–224 (VIML…LNGI), 246–266 (VLGI…PHII), 286–306 (ISWM…GIAF), 327–347 (ILFH…AIMS), 381–401 (FLMV…WIAW), 410–430 (LVGN…IFSL), 438–458 (TGAL…IVWI), and 467–487 (LFGM…TYFV).

The protein belongs to the sodium:solute symporter (SSF) (TC 2.A.21) family.

It is found in the cell membrane. The enzyme catalyses L-proline(in) + Na(+)(in) = L-proline(out) + Na(+)(out). Catalyzes the sodium-dependent uptake of extracellular L-proline. The chain is Sodium/proline symporter 2 (putP2) from Staphylococcus saprophyticus subsp. saprophyticus (strain ATCC 15305 / DSM 20229 / NCIMB 8711 / NCTC 7292 / S-41).